A 131-amino-acid polypeptide reads, in one-letter code: Small ribosomal subunit protein uS8 (131 aa).

It belongs to the universal ribosomal protein uS8 family. In terms of assembly, part of the 30S ribosomal subunit. Contacts proteins S5 and S12.

Its function is as follows. One of the primary rRNA binding proteins, it binds directly to 16S rRNA central domain where it helps coordinate assembly of the platform of the 30S subunit. The polypeptide is Small ribosomal subunit protein uS8 (Acinetobacter baumannii (strain AB307-0294)).